A 930-amino-acid polypeptide reads, in one-letter code: APC membrane recruitment protein 1 (930 aa).

Disordered regions lie at residues 1–33 (MEIATRCEVGAMRGPSSDSVSHDIPQPQSPPSV), 55–76 (FFGGRGRSQRKGSSKTGVTKSQ), 104–133 (CSEPQKSQEDHGKSQSLPRQRRGLRGLFSS), 161–193 (TVPGALPSVSDRGDYHGDSQGEELVPDVPNQTT), 222–245 (EMDKRRRAEEEGIGEDEKTGRQEG), and 366–454 (EVCY…PRDS). Residues 222-242 (EMDKRRRAEEEGIGEDEKTGR) are compositionally biased toward basic and acidic residues. Composition is skewed to polar residues over residues 377-399 (DSPSLTPDQQLSSIRATSSSSPM) and 413-424 (SPQSDRQESVPN). Over residues 439–452 (EESRERPHQERLPR) the composition is skewed to basic and acidic residues.

The protein belongs to the Amer family.

The protein resides in the cytoplasm. The protein localises to the cell membrane. Its subcellular location is the nucleus. Its function is as follows. Regulator of the canonical Wnt signaling pathway. Acts by specifically binding phosphatidylinositol 4,5-bisphosphate (PtdIns(4,5)P2), translocating to the cell membrane and interacting with key regulators of the canonical Wnt signaling pathway, such as components of the beta-catenin destruction complex. Acts both as a positive and negative regulator of the Wnt signaling pathway, depending on the context. The polypeptide is APC membrane recruitment protein 1 (amer1) (Danio rerio (Zebrafish)).